The sequence spans 160 residues: uncharacterized protein (160 aa).

The protein resides in the plastid. This is an uncharacterized protein from Euglena longa (Euglenophycean alga).